The following is a 298-amino-acid chain: Homoserine kinase (298 aa).

79-89 lines the ATP pocket; it reads PIARGLGSSGA.

Belongs to the GHMP kinase family. Homoserine kinase subfamily.

It localises to the cytoplasm. It catalyses the reaction L-homoserine + ATP = O-phospho-L-homoserine + ADP + H(+). The protein operates within amino-acid biosynthesis; L-threonine biosynthesis; L-threonine from L-aspartate: step 4/5. Catalyzes the ATP-dependent phosphorylation of L-homoserine to L-homoserine phosphate. The protein is Homoserine kinase of Pyrobaculum islandicum (strain DSM 4184 / JCM 9189 / GEO3).